Consider the following 696-residue polypeptide: HIPL2 protein (696 aa).

The signal sequence occupies residues 1-24; it reads MAKTNQAITICSLLLLLLLSETTS. Residues Asn-38, Asn-69, Asn-74, Asn-108, Asn-124, Asn-148, Asn-175, Asn-339, Asn-431, Asn-513, Asn-519, Asn-528, Asn-581, and Asn-651 are each glycosylated (N-linked (GlcNAc...) asparagine). Ser-672 is lipidated: GPI-anchor amidated serine. Residues 673–696 constitute a propeptide, removed in mature form; that stretch reads SARKLCFSVFLLLSLLMMFLTLLD.

This sequence belongs to the PQQ oxidoreductase GdhB family. It depends on pyrroloquinoline quinone as a cofactor.

Its subcellular location is the cell membrane. This chain is HIPL2 protein (HIPL2), found in Arabidopsis thaliana (Mouse-ear cress).